We begin with the raw amino-acid sequence, 177 residues long: Thioredoxin M-type, chloroplastic (177 aa).

The transit peptide at 1 to 64 directs the protein to the chloroplast; the sequence is MAAFTCTSSP…SRLRRGGIIC (64 aa). Residues 65 to 177 enclose the Thioredoxin domain; sequence EAQDTATGIP…LATSIDKFLQ (113 aa). Catalysis depends on nucleophile residues C101 and C104. A disulfide bridge links C101 with C104.

It belongs to the thioredoxin family. Plant M-type subfamily. Forms a complex with heterodimeric ferredoxin-thioredoxin reductase (FTR) and ferredoxin.

Its subcellular location is the plastid. The protein localises to the chloroplast. Participates in various redox reactions through the reversible oxidation of the active center dithiol to a disulfide. The M form is known to activate NADP-malate dehydrogenase. This Brassica napus (Rape) protein is Thioredoxin M-type, chloroplastic.